The following is a 246-amino-acid chain: MAVAAVRAAAADAAVTFLWVLCVSTLGASTAAVTSYLRIHEGIHYALLVTVSLLSVLLFAFNLLCDALGGASFNPTALAAFHAAGLSSPRHSSLFPLALRFPAQAAGAVGGAMAISELMPEQYKHMLGGPSLKVDLHTGAAAELVLTFVITLAVLWIIVKGPRNPIVKTWMLSISTVCLVLTGAAYTGPSMNPANAFGWAYVNNRHNTWEQFYVYWICPFVGAVLAAWVFRAVFPPPAPKPKAKKA.

2 helical membrane-spanning segments follow: residues 13-33 and 45-65; these read AAVT…TAAV and YALL…NLLC. The short motif at 74 to 76 is the NPA 1 element; it reads NPT. Transmembrane regions (helical) follow at residues 95–115, 139–159, and 166–186; these read FPLA…AMAI, GAAA…WIIV, and IVKT…GAAY. The NPA 2 motif lies at 192 to 194; it reads NPA. The helical transmembrane segment at 214–234 threads the bilayer; that stretch reads VYWICPFVGAVLAAWVFRAVF.

This sequence belongs to the MIP/aquaporin (TC 1.A.8) family. SIP (TC 1.A.8.10) subfamily. As to expression, expressed in roots, leaves and anthers.

It is found in the membrane. Aquaporins facilitate the transport of water and small neutral solutes across cell membranes. In Oryza sativa subsp. japonica (Rice), this protein is Aquaporin SIP1-1 (SIP1-1).